Here is a 353-residue protein sequence, read N- to C-terminus: Phospho-N-acetylmuramoyl-pentapeptide-transferase (353 aa).

A run of 10 helical transmembrane segments spans residues 24–44 (LGFF…ILWA), 66–86 (TPTM…VLCA), 88–108 (LGNL…FVGF), 129–149 (FGML…KGLD), 160–180 (PLFE…FLST), 192–212 (GLAS…VYVA), 229–249 (VGEL…FLWY), 256–276 (VFMG…NAIV), 281–301 (ILLV…ILQV), and 330–350 (KVIV…LLSL).

Belongs to the glycosyltransferase 4 family. MraY subfamily. Mg(2+) serves as cofactor.

It localises to the cell inner membrane. It carries out the reaction UDP-N-acetyl-alpha-D-muramoyl-L-alanyl-gamma-D-glutamyl-meso-2,6-diaminopimeloyl-D-alanyl-D-alanine + di-trans,octa-cis-undecaprenyl phosphate = di-trans,octa-cis-undecaprenyl diphospho-N-acetyl-alpha-D-muramoyl-L-alanyl-D-glutamyl-meso-2,6-diaminopimeloyl-D-alanyl-D-alanine + UMP. Its pathway is cell wall biogenesis; peptidoglycan biosynthesis. Its function is as follows. Catalyzes the initial step of the lipid cycle reactions in the biosynthesis of the cell wall peptidoglycan: transfers peptidoglycan precursor phospho-MurNAc-pentapeptide from UDP-MurNAc-pentapeptide onto the lipid carrier undecaprenyl phosphate, yielding undecaprenyl-pyrophosphoryl-MurNAc-pentapeptide, known as lipid I. The polypeptide is Phospho-N-acetylmuramoyl-pentapeptide-transferase (Helicobacter pylori (strain ATCC 700392 / 26695) (Campylobacter pylori)).